The sequence spans 859 residues: Rod cGMP-specific 3',5'-cyclic phosphodiesterase subunit alpha (859 aa).

At glycine 2 the chain carries N-acetylglycine. 2 GAF domains span residues 73–222 and 254–431; these read QAEK…NLIM and DIER…GWSV. Positions 483-816 constitute a PDEase domain; it reads EEEELAEILQ…KEWKALADEY (334 aa). The active-site Proton donor is histidine 559. Positions 563, 599, 600, and 720 each coordinate a divalent metal cation. Residues 821 to 859 form a disordered region; it reads KGLEEEKQKQQAANQAAAGSQHGGKQPGGGPASKSCCVQ. Residues 830-840 are compositionally biased toward low complexity; it reads QQAANQAAAGS. Positions 841–851 are enriched in gly residues; it reads QHGGKQPGGGP. Cysteine 856 carries the cysteine methyl ester modification. Cysteine 856 carries the S-farnesyl cysteine lipid modification. Residues 857-859 constitute a propeptide, removed in mature form; it reads CVQ.

Belongs to the cyclic nucleotide phosphodiesterase family. As to quaternary structure, oligomer composed of two catalytic chains (alpha and beta), an inhibitory chain (gamma) and the delta chain. A divalent metal cation is required as a cofactor.

The protein resides in the cell membrane. It localises to the cell projection. It is found in the cilium. The protein localises to the photoreceptor outer segment. It carries out the reaction 3',5'-cyclic GMP + H2O = GMP + H(+). Functionally, rod-specific cGMP phosphodiesterase that catalyzes the hydrolysis of 3',5'-cyclic GMP. This protein participates in processes of transmission and amplification of the visual signal. This Bos taurus (Bovine) protein is Rod cGMP-specific 3',5'-cyclic phosphodiesterase subunit alpha.